The sequence spans 331 residues: Phenol 2-monooxygenase, oxygenase component DmpL (331 aa).

The protein belongs to the TmoE/XamoE family. As to quaternary structure, the multicomponent enzyme phenol hydroxylase is formed by DmpL (P1 component), DmpM (P2 component), DmpN (P3 component), DmpO (P4 component) and DmpP (P5 component). The oxygenase component is a dimer composed of three subunits, DmpL, DmpN and DmpO (DmpLNO). DmpL interacts with the auxiliary protein DmpK (P0 component).

The enzyme catalyses phenol + NADH + O2 + H(+) = catechol + NAD(+) + H2O. It participates in aromatic compound metabolism; phenol degradation. Its activity is regulated as follows. Requires DmpM for efficient turnover. The activity of DmpLNO oxygenase is inhibited by dithiothreitol (DTT) by a mechanism apparently involving H(2)O(2) generation. Its function is as follows. Part of a multicomponent enzyme which catalyzes the degradation of phenol and some of its methylated derivatives. DmpL, DmpN and DmpO form the oxygenase component of the complex. Required for growth on phenol and for in vitro phenol hydroxylase activity. The polypeptide is Phenol 2-monooxygenase, oxygenase component DmpL (Pseudomonas sp. (strain CF600)).